The following is a 21-amino-acid chain: Glucan endo-1,3-beta-glucosidase 2 (21 aa).

A disordered region spans residues 1-21; sequence APGDLLWSDEFDGAAGSAPNP.

It carries out the reaction Hydrolysis of (1-&gt;3)-beta-D-glucosidic linkages in (1-&gt;3)-beta-D-glucans.. This Papiliotrema laurentii (Cryptococcus laurentii) protein is Glucan endo-1,3-beta-glucosidase 2.